The sequence spans 207 residues: Outer-membrane lipoprotein LolB (207 aa).

The N-terminal stretch at methionine 1–alanine 21 is a signal peptide. The N-palmitoyl cysteine moiety is linked to residue cysteine 22. Cysteine 22 is lipidated: S-diacylglycerol cysteine.

This sequence belongs to the LolB family. Monomer.

Its subcellular location is the cell outer membrane. Functionally, plays a critical role in the incorporation of lipoproteins in the outer membrane after they are released by the LolA protein. In Pectobacterium carotovorum subsp. carotovorum (strain PC1), this protein is Outer-membrane lipoprotein LolB.